A 122-amino-acid polypeptide reads, in one-letter code: Large ribosomal subunit protein uL14 (122 aa).

This sequence belongs to the universal ribosomal protein uL14 family. In terms of assembly, part of the 50S ribosomal subunit. Forms a cluster with proteins L3 and L19. In the 70S ribosome, L14 and L19 interact and together make contacts with the 16S rRNA in bridges B5 and B8.

Functionally, binds to 23S rRNA. Forms part of two intersubunit bridges in the 70S ribosome. The sequence is that of Large ribosomal subunit protein uL14 from Desulfatibacillum aliphaticivorans.